The sequence spans 268 residues: Ribosomal RNA small subunit methyltransferase A (268 aa).

S-adenosyl-L-methionine is bound by residues Asn18, Leu20, Gly45, Glu66, Asp91, and Asn112.

The protein belongs to the class I-like SAM-binding methyltransferase superfamily. rRNA adenine N(6)-methyltransferase family. RsmA subfamily.

It localises to the cytoplasm. The catalysed reaction is adenosine(1518)/adenosine(1519) in 16S rRNA + 4 S-adenosyl-L-methionine = N(6)-dimethyladenosine(1518)/N(6)-dimethyladenosine(1519) in 16S rRNA + 4 S-adenosyl-L-homocysteine + 4 H(+). In terms of biological role, specifically dimethylates two adjacent adenosines (A1518 and A1519) in the loop of a conserved hairpin near the 3'-end of 16S rRNA in the 30S particle. May play a critical role in biogenesis of 30S subunits. In Pseudoalteromonas translucida (strain TAC 125), this protein is Ribosomal RNA small subunit methyltransferase A.